We begin with the raw amino-acid sequence, 419 residues long: UDP-N-acetylglucosamine 1-carboxyvinyltransferase (419 aa).

Residue 22–23 (KN) coordinates phosphoenolpyruvate. R92 contributes to the UDP-N-acetyl-alpha-D-glucosamine binding site. The active-site Proton donor is the C116. 2-(S-cysteinyl)pyruvic acid O-phosphothioketal is present on C116. D307 and V329 together coordinate UDP-N-acetyl-alpha-D-glucosamine.

The protein belongs to the EPSP synthase family. MurA subfamily.

It is found in the cytoplasm. It carries out the reaction phosphoenolpyruvate + UDP-N-acetyl-alpha-D-glucosamine = UDP-N-acetyl-3-O-(1-carboxyvinyl)-alpha-D-glucosamine + phosphate. It functions in the pathway cell wall biogenesis; peptidoglycan biosynthesis. Functionally, cell wall formation. Adds enolpyruvyl to UDP-N-acetylglucosamine. This Pseudothermotoga lettingae (strain ATCC BAA-301 / DSM 14385 / NBRC 107922 / TMO) (Thermotoga lettingae) protein is UDP-N-acetylglucosamine 1-carboxyvinyltransferase.